The sequence spans 623 residues: Bifunctional dihydrofolate reductase-thymidylate synthase (623 aa).

Residues 9–237 enclose the DHFR domain; sequence DIYAICACCK…TTLDFLVYSK (229 aa). 13–14 provides a ligand contact to substrate; that stretch reads IC. NADP(+)-binding positions include alanine 15 and 38-44; that span reads GLGNKGT. Aspartate 53 serves as a coordination point for substrate. 3 repeat units span residues 88 to 91, 94 to 97, and 100 to 103. Residues 88–103 are 3 X 4 AA repeats of G-G-D-N; it reads GGDNTSGGDNTHGGDN. Residues 115–117, 137–139, and aspartate 153 contribute to the NADP(+) site; these read RSS and SKT. The substrate site is built by isoleucine 173, tyrosine 179, and threonine 194. 174–181 provides a ligand contact to NADP(+); that stretch reads GGAQVYRE. A disordered region spans residues 263-309; the sequence is TAMRRNVAPRTAAPPMGPHSRANGERAPPRARARRTTPRQRKTTSCT. Residues 291-304 show a composition bias toward basic residues; the sequence is PRARARRTTPRQRK. The tract at residues 337–623 is thymidylate synthase; that stretch reads QHPEYQYLGI…HDKITMEMAA (287 aa). Arginine 360 provides a ligand contact to dUMP. The active site involves cysteine 505. Residues histidine 506, 524 to 528, asparagine 536, and 566 to 568 each bind dUMP; these read QRSCD and HVY.

This sequence in the N-terminal section; belongs to the dihydrofolate reductase family. The protein in the C-terminal section; belongs to the thymidylate synthase family. As to quaternary structure, homodimer.

It catalyses the reaction (6S)-5,6,7,8-tetrahydrofolate + NADP(+) = 7,8-dihydrofolate + NADPH + H(+). The catalysed reaction is dUMP + (6R)-5,10-methylene-5,6,7,8-tetrahydrofolate = 7,8-dihydrofolate + dTMP. Its pathway is cofactor biosynthesis; tetrahydrofolate biosynthesis; 5,6,7,8-tetrahydrofolate from 7,8-dihydrofolate: step 1/1. Bifunctional enzyme. Involved in de novo dTMP biosynthesis. Key enzyme in folate metabolism. Catalyzes an essential reaction for de novo glycine and purine synthesis, DNA precursor synthesis, and for the conversion of dUMP to dTMP. The protein is Bifunctional dihydrofolate reductase-thymidylate synthase of Plasmodium vivax.